Reading from the N-terminus, the 154-residue chain is Spermatogenesis-associated protein 19, mitochondrial (154 aa).

The N-terminal 24 residues, 1-24 (MIITTWIMYILARKSIGLPFPPRV), are a transit peptide targeting the mitochondrion. Serine 26 and serine 116 each carry phosphoserine.

Expressed in the testis.

It localises to the mitochondrion outer membrane. The protein localises to the mitochondrion. The protein resides in the cell projection. Its subcellular location is the cilium. It is found in the flagellum. In terms of biological role, essential for sperm motility and male fertility. Plays an important role in sperm motility by regulating the organization and function of the mitochondria and is also required for correct sperm midpiece assembly. This is Spermatogenesis-associated protein 19, mitochondrial (Spata19) from Rattus norvegicus (Rat).